We begin with the raw amino-acid sequence, 88 residues long: Small ribosomal subunit protein bS16 (88 aa).

It belongs to the bacterial ribosomal protein bS16 family.

This is Small ribosomal subunit protein bS16 from Buchnera aphidicola subsp. Cinara cedri (strain Cc).